The chain runs to 75 residues: ATP synthase subunit 9, mitochondrial (75 aa).

Helical transmembrane passes span 10–30 and 55–75; these read LVLG…GILF and FALV…VYFI.

Belongs to the ATPase C chain family. In terms of assembly, F-type ATPases have 2 components, CF(1) - the catalytic core - and CF(0) - the membrane proton channel. CF(1) has five subunits: alpha(3), beta(3), gamma(1), delta(1), epsilon(1). CF(0) has three main subunits: a, b and c.

It is found in the mitochondrion membrane. Functionally, mitochondrial membrane ATP synthase (F(1)F(0) ATP synthase or Complex V) produces ATP from ADP in the presence of a proton gradient across the membrane which is generated by electron transport complexes of the respiratory chain. F-type ATPases consist of two structural domains, F(1) - containing the extramembraneous catalytic core and F(0) - containing the membrane proton channel, linked together by a central stalk and a peripheral stalk. During catalysis, ATP synthesis in the catalytic domain of F(1) is coupled via a rotary mechanism of the central stalk subunits to proton translocation. Part of the complex F(0) domain. A homomeric c-ring of probably 10 subunits is part of the complex rotary element. The protein is ATP synthase subunit 9, mitochondrial (ATP9) of Paramecium tetraurelia.